The chain runs to 273 residues: NAD-dependent protein deacylase (273 aa).

The Deacetylase sirtuin-type domain maps to 20–272 (RERLRQRIFF…PEFVDKFLKG (253 aa)). 48 to 67 (GAGISAESGIRTFRAADGLW) contacts NAD(+). Residues Tyr-92 and Arg-95 each coordinate substrate. An NAD(+)-binding site is contributed by 129–132 (QNID). Residue His-147 is the Proton acceptor of the active site. Zn(2+)-binding residues include Cys-155 and Cys-174. NAD(+) is bound by residues 214–216 (GTS), 240–242 (NLE), and Ala-258.

The protein belongs to the sirtuin family. Class III subfamily. It depends on Zn(2+) as a cofactor.

It is found in the cytoplasm. It catalyses the reaction N(6)-acetyl-L-lysyl-[protein] + NAD(+) + H2O = 2''-O-acetyl-ADP-D-ribose + nicotinamide + L-lysyl-[protein]. The enzyme catalyses N(6)-succinyl-L-lysyl-[protein] + NAD(+) + H2O = 2''-O-succinyl-ADP-D-ribose + nicotinamide + L-lysyl-[protein]. The catalysed reaction is N(6)-(2-hydroxyisobutanoyl)-L-lysyl-[protein] + NAD(+) + H2O = 2''-O-(2-hydroxyisobutanoyl)-ADP-D-ribose + nicotinamide + L-lysyl-[protein]. NAD-dependent lysine deacetylase that specifically removes acetyl groups on target proteins. Also acts as a protein-lysine deacylase by mediating protein desuccinylation and de-2-hydroxyisobutyrylation. Modulates the activities of several proteins which are inactive in their acylated form. The chain is NAD-dependent protein deacylase from Salmonella typhi.